The sequence spans 897 residues: uncharacterized protein (897 aa).

Disordered regions lie at residues 25–89 (RLQD…TRKR) and 106–168 (PTRL…TPPS). Composition is skewed to low complexity over residues 32-44 (SSSPSSAPSSSSS), 57-68 (SLQNSQSSSYSL), and 106-142 (PTRLTSTPSNSSSLPSIPSSSSTPSISSIPHTTSSVS). One can recognise a Helicase ATP-binding domain in the interval 263 to 446 (SMEQSSKCGG…YSLLKFLRIK (184 aa)). 276–283 (DDMGLGKT) is a binding site for ATP. Residues 397-400 (DEAH) carry the DEAH box motif. The RING-type zinc finger occupies 606-655 (CSVCLDPCLAPVFIIPCGHFTCQECMSMLVGQKYGSSSTSTIIAKCPMCR). A Helicase C-terminal domain is found at 727–890 (QARQTILDII…LSRLDKEELL (164 aa)).

This sequence belongs to the SNF2/RAD54 helicase family.

It is found in the cytoplasm. It localises to the nucleus. This is an uncharacterized protein from Schizosaccharomyces pombe (strain 972 / ATCC 24843) (Fission yeast).